Consider the following 390-residue polypeptide: 3-ketoacyl-CoA thiolase (390 aa).

Cysteine 95 functions as the Acyl-thioester intermediate in the catalytic mechanism. Active-site proton acceptor residues include histidine 346 and cysteine 376.

Belongs to the thiolase-like superfamily. Thiolase family. In terms of assembly, heterotetramer of two alpha chains (FadB) and two beta chains (FadA).

It localises to the cytoplasm. The enzyme catalyses an acyl-CoA + acetyl-CoA = a 3-oxoacyl-CoA + CoA. It participates in lipid metabolism; fatty acid beta-oxidation. Its function is as follows. Catalyzes the final step of fatty acid oxidation in which acetyl-CoA is released and the CoA ester of a fatty acid two carbons shorter is formed. The polypeptide is 3-ketoacyl-CoA thiolase (Acinetobacter baumannii (strain AB307-0294)).